A 461-amino-acid chain; its full sequence is tRNA-splicing endonuclease subunit Sen2 (461 aa).

2 disordered regions span residues 140–176 (GAEQTGDSCDTVCPNTENTELSGQSSTDTGNIATSSP) and 190–210 (GDPASDSMVGSKEQEPADVKE). The span at 144–176 (TGDSCDTVCPNTENTELSGQSSTDTGNIATSSP) shows a compositional bias: polar residues. A compositionally biased stretch (basic and acidic residues) spans 201 to 210 (KEQEPADVKE). Residues tyrosine 365, histidine 373, and lysine 412 contribute to the active site.

It belongs to the tRNA-intron endonuclease family. TRNA splicing endonuclease is a heterotetramer composed of SEN2, SEN15, SEN34/LENG5 and SEN54.

It localises to the nucleus. It catalyses the reaction pretRNA = a 3'-half-tRNA molecule with a 5'-OH end + a 5'-half-tRNA molecule with a 2',3'-cyclic phosphate end + an intron with a 2',3'-cyclic phosphate and a 5'-hydroxyl terminus.. Functionally, constitutes one of the two catalytic subunit of the tRNA-splicing endonuclease complex, a complex responsible for identification and cleavage of the splice sites in pre-tRNA. It cleaves pre-tRNA at the 5'- and 3'-splice sites to release the intron. The products are an intron and two tRNA half-molecules bearing 2',3'-cyclic phosphate and 5'-OH termini. There are no conserved sequences at the splice sites, but the intron is invariably located at the same site in the gene, placing the splice sites an invariant distance from the constant structural features of the tRNA body. Probably carries the active site for 5'-splice site cleavage. The tRNA splicing endonuclease is also involved in mRNA processing via its association with pre-mRNA 3'-end processing factors, establishing a link between pre-tRNA splicing and pre-mRNA 3'-end formation, suggesting that the endonuclease subunits function in multiple RNA-processing events. The chain is tRNA-splicing endonuclease subunit Sen2 (TSEN2) from Gallus gallus (Chicken).